The sequence spans 128 residues: Large ribosomal subunit protein bL12 (128 aa).

This sequence belongs to the bacterial ribosomal protein bL12 family. In terms of assembly, homodimer. Part of the ribosomal stalk of the 50S ribosomal subunit. Forms a multimeric L10(L12)X complex, where L10 forms an elongated spine to which 2 to 4 L12 dimers bind in a sequential fashion. Binds GTP-bound translation factors.

Functionally, forms part of the ribosomal stalk which helps the ribosome interact with GTP-bound translation factors. Is thus essential for accurate translation. This chain is Large ribosomal subunit protein bL12, found in Kineococcus radiotolerans (strain ATCC BAA-149 / DSM 14245 / SRS30216).